A 515-amino-acid polypeptide reads, in one-letter code: Synaptic vesicular amine transporter (515 aa).

Residues 1 to 20 (MALSDLVLLRWLRDSRHSRK) lie on the Cytoplasmic side of the membrane. Residues 21–41 (LILFIVFLALLLDNMLLTVVV) traverse the membrane as a helical segment. Topologically, residues 42 to 130 (PIIPSYLYSI…EDRDLLNENV (89 aa)) are lumenal, vesicle. 5 N-linked (GlcNAc...) asparagine glycosylation sites follow: asparagine 56, asparagine 80, asparagine 81, asparagine 89, and asparagine 111. An intrachain disulfide couples cysteine 118 to cysteine 325. The chain crosses the membrane as a helical span at residues 131–151 (QVGLLFASKATVQLLTNPFIG). At 152 to 160 (LLTNRIGYP) the chain is on the cytoplasmic side. The chain crosses the membrane as a helical span at residues 161-181 (IPMFAGFCIMFISTVMFAFSS). Residues 182–190 (SYAFLLIAR) lie on the Lumenal, vesicle side of the membrane. Residues 191–211 (SLQGIGSSCSSVAGMGMLASV) traverse the membrane as a helical segment. The Cytoplasmic portion of the chain corresponds to 212–220 (YTDDEERGK). A helical transmembrane segment spans residues 221-243 (PMGIALGGLAMGVLVGPPFGSVL). Residues leucine 229 and valine 233 each coordinate serotonin. The Lumenal, vesicle portion of the chain corresponds to 244-249 (YEFVGK). Residues 250–272 (TAPFLVLAALVLLDGAIQLFVLQ) traverse the membrane as a helical segment. Residues 273-292 (PSRVQPESQKGTPLTTLLKD) are Cytoplasmic-facing. The helical transmembrane segment at 293 to 312 (PYILIAAGSICFANMGIAML) threads the bilayer. Serotonin contacts are provided by asparagine 306, isoleucine 309, glutamate 313, phenylalanine 335, and tyrosine 342. At 313–329 (EPALPIWMMETMCSRKW) the chain is on the lumenal, vesicle side. The chain crosses the membrane as a helical span at residues 330-353 (QLGVAFLPASISYLIGTNIFGILA). Topologically, residues 354 to 358 (HKMGR) are cytoplasmic. The chain crosses the membrane as a helical span at residues 359–379 (WLCALLGMVIVGISILCIPFA). Residues 380–390 (KNIYGLIAPNF) are Lumenal, vesicle-facing. A helical transmembrane segment spans residues 391 to 411 (GVGFAIGMVDSSMMPIMGYLV). A serotonin-binding site is contributed by aspartate 400. The Cytoplasmic portion of the chain corresponds to 412–415 (DLRH). A helical membrane pass occupies residues 416 to 436 (VSVYGSVYAIADVAFCMGYAI). Tyrosine 434 is a serotonin binding site. Residues 437-441 (GPSAG) lie on the Lumenal, vesicle side of the membrane. Residues 442 to 463 (GAIAKAIGFPWLMTIIGIIDIA) form a helical membrane-spanning segment. Residues 464–515 (FAPLCFFLRSPPAKEEKMAILMDHNCPIKRKMYTQNNVQSYPIGDDEESESD) are Cytoplasmic-facing. Phosphoserine; by CK2 is present on residues serine 512 and serine 514.

The protein belongs to the major facilitator superfamily. Vesicular transporter family. As to quaternary structure, interacts with SLC6A3. In terms of tissue distribution, expressed in the substantia nigra and the tuberomammillary nucleus of the posterior hypothalamus. Expressed in stomach, in particular in varicose nerve fibers and enterochromaffin-like cells in the corpus region (at protein level).

The protein localises to the cytoplasmic vesicle. It localises to the secretory vesicle. The protein resides in the synaptic vesicle membrane. Its subcellular location is the secretory vesicle membrane. It is found in the cell projection. The protein localises to the axon. It localises to the dendrite. The catalysed reaction is serotonin(in) + 2 H(+)(out) = serotonin(out) + 2 H(+)(in). It catalyses the reaction dopamine(in) + 2 H(+)(out) = dopamine(out) + 2 H(+)(in). It carries out the reaction histamine(in) + 2 H(+)(out) = histamine(out) + 2 H(+)(in). Its activity is regulated as follows. Strongly inhibited by reserpine and tetrabenazine. Also inhibited to a lesser extent by ketanserin and fenfluramine. Reserpine and ketanserin inhibit by blocking the substrate-binding pocket. Tetrabenazine traps SLC18A2/VMAT2 in an occluded conformation and its inhibition is specific to SLC18A2/VMAT2 but not SLC18A1/VMAT1. Its function is as follows. Electrogenic antiporter that exchanges one cationic monoamine with two intravesicular protons across the membrane of secretory and synaptic vesicles. Uses the electrochemical proton gradient established by the V-type proton-pump ATPase to accumulate high concentrations of monoamines inside the vesicles prior to their release via exocytosis. Transports a variety of catecholamines such as dopamine, adrenaline and noradrenaline, histamine, and indolamines such as serotonin. Regulates the transvesicular monoaminergic gradient that determines the quantal size. Mediates somatodendritic dopamine release in hippocampal neurons, likely as part of a regulated secretory pathway that integrates retrograde synaptic signals. Acts as a primary transporter for striatal dopamine loading ensuring impulse-dependent release of dopamine at the synaptic cleft. Responsible for histamine and serotonin storage and subsequent corelease from mast cell granules. This chain is Synaptic vesicular amine transporter (Slc18a2), found in Rattus norvegicus (Rat).